The chain runs to 113 residues: Large ribosomal subunit protein bL19 (113 aa).

It belongs to the bacterial ribosomal protein bL19 family.

Its function is as follows. This protein is located at the 30S-50S ribosomal subunit interface and may play a role in the structure and function of the aminoacyl-tRNA binding site. The polypeptide is Large ribosomal subunit protein bL19 (Moorella thermoacetica (strain ATCC 39073 / JCM 9320)).